An 86-amino-acid chain; its full sequence is Myosin light chain alkali (86 aa).

In terms of domain architecture, EF-hand spans 11–46 (GCYEDFIECLKLYDKEENGTMMLAELQHALLALGES).

In terms of assembly, myosin is a hexamer of 2 heavy chains and 4 light chains.

This chain is Myosin light chain alkali (Mlc1), found in Drosophila subobscura (Fruit fly).